The sequence spans 160 residues: Sec-independent protein translocase protein TatB (160 aa).

Residues 1–21 form a helical membrane-spanning segment; the sequence is MIDLGVSKIALIGAVALIVIG. Disordered regions lie at residues 70–100 and 133–160; these read ARDVETSIQTSASDFEKSWSDATGSDASTAT and RSGVRTKAQSGAARVARFRPQSGRSSSF. The span at 89 to 100 shows a compositional bias: polar residues; the sequence is SDATGSDASTAT.

Belongs to the TatB family. As to quaternary structure, the Tat system comprises two distinct complexes: a TatABC complex, containing multiple copies of TatA, TatB and TatC subunits, and a separate TatA complex, containing only TatA subunits. Substrates initially bind to the TatABC complex, which probably triggers association of the separate TatA complex to form the active translocon.

The protein localises to the cell inner membrane. Its function is as follows. Part of the twin-arginine translocation (Tat) system that transports large folded proteins containing a characteristic twin-arginine motif in their signal peptide across membranes. Together with TatC, TatB is part of a receptor directly interacting with Tat signal peptides. TatB may form an oligomeric binding site that transiently accommodates folded Tat precursor proteins before their translocation. The sequence is that of Sec-independent protein translocase protein TatB from Polaromonas sp. (strain JS666 / ATCC BAA-500).